Here is a 396-residue protein sequence, read N- to C-terminus: L-lactate dehydrogenase (396 aa).

Residues 1–380 (MIISAASDYR…TQDSLVQGLG (380 aa)) enclose the FMN hydroxy acid dehydrogenase domain. Tyr-24 is a substrate binding site. Residues Ser-106 and Gln-127 each coordinate FMN. Tyr-129 contacts substrate. Residue Thr-155 coordinates FMN. Arg-164 is a substrate binding site. Position 251 (Lys-251) interacts with FMN. The active-site Proton acceptor is His-275. Arg-278 is a substrate binding site. 306 to 330 (DSGIRNGLDVVRMIALGADTVLLGR) lines the FMN pocket.

The protein belongs to the FMN-dependent alpha-hydroxy acid dehydrogenase family. Requires FMN as cofactor.

It is found in the cell inner membrane. The enzyme catalyses (S)-lactate + A = pyruvate + AH2. Catalyzes the conversion of L-lactate to pyruvate. Is coupled to the respiratory chain. The sequence is that of L-lactate dehydrogenase from Shigella dysenteriae serotype 1 (strain Sd197).